Consider the following 143-residue polypeptide: Nucleoside diphosphate kinase (143 aa).

Positions 11, 59, 87, 93, 104, and 114 each coordinate ATP. Histidine 117 functions as the Pros-phosphohistidine intermediate in the catalytic mechanism.

It belongs to the NDK family. As to quaternary structure, homotetramer. It depends on Mg(2+) as a cofactor.

It localises to the cytoplasm. It catalyses the reaction a 2'-deoxyribonucleoside 5'-diphosphate + ATP = a 2'-deoxyribonucleoside 5'-triphosphate + ADP. The catalysed reaction is a ribonucleoside 5'-diphosphate + ATP = a ribonucleoside 5'-triphosphate + ADP. Its function is as follows. Major role in the synthesis of nucleoside triphosphates other than ATP. The ATP gamma phosphate is transferred to the NDP beta phosphate via a ping-pong mechanism, using a phosphorylated active-site intermediate. In Shewanella oneidensis (strain ATCC 700550 / JCM 31522 / CIP 106686 / LMG 19005 / NCIMB 14063 / MR-1), this protein is Nucleoside diphosphate kinase.